The following is a 774-amino-acid chain: DNA ligase 3 (774 aa).

The segment at 1 to 25 (MPPKKRMKNGSSLKSTSKKGEKSRN) is disordered. K433 acts as the N6-AMP-lysine intermediate in catalysis.

The protein belongs to the ATP-dependent DNA ligase family.

It localises to the nucleus. The enzyme catalyses ATP + (deoxyribonucleotide)n-3'-hydroxyl + 5'-phospho-(deoxyribonucleotide)m = (deoxyribonucleotide)n+m + AMP + diphosphate.. The chain is DNA ligase 3 (adl1) from Schizosaccharomyces pombe (strain 972 / ATCC 24843) (Fission yeast).